Here is a 296-residue protein sequence, read N- to C-terminus: Heme oxygenase 1 (296 aa).

Over 1–273 the chain is Cytoplasmic; that stretch reads METSQPHNAE…RMQADMLTTS (273 aa). Heme b contacts are provided by lysine 21, histidine 28, tyrosine 137, and arginine 186. The tract at residues 231 to 264 is disordered; the sequence is GHAVQPKAELRTRSVNKSHENSPAAGKESERTSR. Positions 238–250 are enriched in basic and acidic residues; sequence AELRTRSVNKSHE. A helical; Anchor for type IV membrane protein membrane pass occupies residues 274–296; it reads PLVRWLLALGFIATTVAVGLFAM.

This sequence belongs to the heme oxygenase family. Homodimer and higher order homooligomer. Oligomerization is crucial for its stability and function in the endoplasmic reticulum. A soluble form arises by proteolytic removal of the membrane anchor.

It is found in the endoplasmic reticulum membrane. The catalysed reaction is heme b + 3 reduced [NADPH--hemoprotein reductase] + 3 O2 = biliverdin IXalpha + CO + Fe(2+) + 3 oxidized [NADPH--hemoprotein reductase] + 3 H2O + H(+). Its activity is regulated as follows. Inhibited by metalloporphyrins in the following order of decreasing potency: tin mesoporphyrin &gt; tin protoporphyrin &gt; zinc protoporphyrin &gt; manganese protoporphyrin &gt; cobalt protoporphyrin. In terms of biological role, catalyzes the oxidative cleavage of heme at the alpha-methene bridge carbon, released as carbon monoxide (CO), to generate biliverdin IXalpha, while releasing the central heme iron chelate as ferrous iron. Affords protection against programmed cell death and this cytoprotective effect relies on its ability to catabolize free heme and prevent it from sensitizing cells to undergo apoptosis. Its function is as follows. Catalyzes the oxidative cleavage of heme at the alpha-methene bridge carbon, released as carbon monoxide (CO), to generate biliverdin IXalpha, while releasing the central heme iron chelate as ferrous iron. This is Heme oxygenase 1 (HMOX1) from Gallus gallus (Chicken).